The chain runs to 314 residues: ATP synthase gamma chain (314 aa).

It belongs to the ATPase gamma chain family. As to quaternary structure, F-type ATPases have 2 components, CF(1) - the catalytic core - and CF(0) - the membrane proton channel. CF(1) has five subunits: alpha(3), beta(3), gamma(1), delta(1), epsilon(1). CF(0) has three main subunits: a, b and c.

Its subcellular location is the cell inner membrane. Produces ATP from ADP in the presence of a proton gradient across the membrane. The gamma chain is believed to be important in regulating ATPase activity and the flow of protons through the CF(0) complex. This Gloeobacter violaceus (strain ATCC 29082 / PCC 7421) protein is ATP synthase gamma chain.